Here is a 334-residue protein sequence, read N- to C-terminus: Leucine-rich repeat-containing protein 39 (334 aa).

A coiled-coil region spans residues 10 to 47; it reads AVNAVKEVWEKRIKKLNEDLKREKEFQQKLVRIWEERV. LRR repeat units follow at residues 84-105, 107-128, 130-151, 153-176, 177-198, 200-221, 223-244, 246-267, and 269-290; these read QLQEWQLHRIGLLKIPEFIGRF, NLIVLDLSRNTITEIPRGIGLL, RLQELILSYNRIKTVPMELSYC, SLEKLELAVNRDISDLPQELSNLL, KLTHLDLSMNLFTTIPPAVLNM, ALEWLDMGSNRLEQLPDTIERM, NLHTLWLQRNEITCLPETISSM, NLSTLVLSNNKLQDIPVCMEKM, and NLRFVNFRDNPLKLEVTLPPSE.

Interacts with MYH7 (via C-terminus).

It is found in the cytoplasm. It localises to the myofibril. The protein localises to the sarcomere. The protein resides in the m line. In terms of biological role, component of the sarcomeric M-band which plays a role in myocyte response to biomechanical stress. May regulate expression of other M-band proteins via an SRF-dependent pathway. Important for normal contractile function in heart. The sequence is that of Leucine-rich repeat-containing protein 39 from Bos taurus (Bovine).